Here is a 211-residue protein sequence, read N- to C-terminus: Glutathione S-transferase class-mu 28 kDa isozyme (211 aa).

Residues 4–86 (DHIKVIYFNG…YMAKKHHMMG (83 aa)) enclose the GST N-terminal domain. Glutathione is bound by residues Tyr10, Arg16, Trp41, Lys45, Leu53, Glu70, Ser71, and Asp104. In terms of domain architecture, GST C-terminal spans 88–211 (TEEEYYNVEK…YLSDRAATPF (124 aa)).

The protein belongs to the GST superfamily. Mu family. Homodimer.

It catalyses the reaction RX + glutathione = an S-substituted glutathione + a halide anion + H(+). Its function is as follows. Conjugation of reduced glutathione to a wide number of exogenous and endogenous hydrophobic electrophiles. GST isoenzymes appear to play a central role in the parasite detoxification system. Other functions are also suspected including a role in increasing the solubility of haematin in the parasite gut. The protein is Glutathione S-transferase class-mu 28 kDa isozyme of Schistosoma haematobium (Blood fluke).